A 438-amino-acid polypeptide reads, in one-letter code: Glutamyl-tRNA(Gln) amidotransferase subunit D (438 aa).

Residues Pro92–Asn422 enclose the Asparaginase/glutaminase domain. Active-site residues include Thr102, Thr178, Asp179, and Lys256.

This sequence belongs to the asparaginase 1 family. GatD subfamily. In terms of assembly, heterodimer of GatD and GatE.

It catalyses the reaction L-glutamyl-tRNA(Gln) + L-glutamine + ATP + H2O = L-glutaminyl-tRNA(Gln) + L-glutamate + ADP + phosphate + H(+). Allows the formation of correctly charged Gln-tRNA(Gln) through the transamidation of misacylated Glu-tRNA(Gln) in organisms which lack glutaminyl-tRNA synthetase. The reaction takes place in the presence of glutamine and ATP through an activated gamma-phospho-Glu-tRNA(Gln). The GatDE system is specific for glutamate and does not act on aspartate. The protein is Glutamyl-tRNA(Gln) amidotransferase subunit D of Pyrococcus horikoshii (strain ATCC 700860 / DSM 12428 / JCM 9974 / NBRC 100139 / OT-3).